The sequence spans 329 residues: Malate dehydrogenase (329 aa).

12 to 18 (GAAGQIG) is an NAD(+) binding site. Positions 95 and 101 each coordinate substrate. NAD(+) is bound by residues Asn-108, Gln-115, and 132–134 (VGN). Residues Asn-134 and Arg-165 each coordinate substrate. His-190 (proton acceptor) is an active-site residue.

The protein belongs to the LDH/MDH superfamily. MDH type 2 family.

The catalysed reaction is (S)-malate + NAD(+) = oxaloacetate + NADH + H(+). Catalyzes the reversible oxidation of malate to oxaloacetate. This Bordetella petrii (strain ATCC BAA-461 / DSM 12804 / CCUG 43448) protein is Malate dehydrogenase.